A 652-amino-acid chain; its full sequence is MDAGGEEEKQERHRVDGASPSMVALRSDVLHAVLGGKSHNQDTSELVTLSEWSKNKFPLYAYAAAFMFLVMQEYDKRSHGIDFLNRDFVVRDLGMPSLNKHFPVKEFYCSYRRKSGHSTYTYGFFMLQKLILIQNAHIRREEEEEGACSMVTTSHRTGHSRSVGLAARDDPTAEMRLVQGEGSVGTTSHRMGALLERWISREGRTDGGDTSVQGERSVGTTSHRMGALLDVGSAVDDPAKQRSAMGNSLPVESKFTDEKENDRIKYVVSSMQGWGEKMEDAHAAILNLDDTMTSFFGVYDGHGGAEVASYCAKRFHIELCNHEDYDSNLSNAMRSAFYSMDEDLQLSDAWRELVIPRNNGWMYFLKAAACTSICKATYTEPAYEGSTACVVVIRGNQLIVGHAGDSRCVLSRNGQASALSVDHKPDRDFACKKNERLPPEDQMLTCNPDILTMDITDDMEFLVIATEGLWCNMTNQNVVDHTHDRLLEGAEARVICEELVQFGLPSGDNTTVILVLFKPGAYPAVPPVDTDTDTDSHTGDDVDNNDPANEVDPTANAGSDDSNTSDEVKVDATATAVGSSSTTAVAADEATVVSLSTATITIVDNYFFINTSEEVDPTANAGSDDSNTGDEVKVDATASSGLSDWELIYSEF.

The PPM-type phosphatase domain maps to 265-517 (KYVVSSMQGW…DNTTVILVLF (253 aa)). Mn(2+)-binding residues include aspartate 300, glycine 301, glutamate 467, and aspartate 508. The segment at 524–567 (AVPPVDTDTDTDSHTGDDVDNNDPANEVDPTANAGSDDSNTSDE) is disordered.

This sequence belongs to the PP2C family. Mg(2+) serves as cofactor. Requires Mn(2+) as cofactor.

The enzyme catalyses O-phospho-L-seryl-[protein] + H2O = L-seryl-[protein] + phosphate. It catalyses the reaction O-phospho-L-threonyl-[protein] + H2O = L-threonyl-[protein] + phosphate. This chain is Probable protein phosphatase 2C 19, found in Oryza sativa subsp. japonica (Rice).